A 407-amino-acid polypeptide reads, in one-letter code: Substance-P receptor (407 aa).

At 1–31 the chain is on the extracellular side; the sequence is MDNVLPVDSDLSPNISTNTSEPNQFVQPAWQ. N-linked (GlcNAc...) asparagine glycosylation is found at N14 and N18. Residues 32–54 traverse the membrane as a helical segment; it reads IVLWAAAYTVIVVTSVVGNVVVM. At 55-64 the chain is on the cytoplasmic side; the sequence is WIILAHKRMR. A helical membrane pass occupies residues 65–86; sequence TVTNYFLVNLAFAEASMAAFNT. Topologically, residues 87 to 106 are extracellular; sequence VVNFTYAVHNEWYYGLFYCK. An intrachain disulfide couples C105 to C180. A helical transmembrane segment spans residues 107 to 128; sequence FHNFFPIAAVFASIYSMTAVAF. Topologically, residues 129 to 148 are cytoplasmic; it reads DRYMAIIHPLQPRLSATATK. The chain crosses the membrane as a helical span at residues 149 to 169; the sequence is VVICVIWVLALLLAFPQGYYS. The Extracellular portion of the chain corresponds to 170-194; the sequence is TTETMPSRVVCMIEWPEHPNKIYEK. Residues 195–219 form a helical membrane-spanning segment; that stretch reads VYHICVTVLIYFLPLLVIGYAYTVV. A CP-96345-binding site is contributed by H197. Residues 220 to 248 are Cytoplasmic-facing; the sequence is GITLWASEIPGDSSDRYHEQVSAKRKVVK. Residues 249 to 270 form a helical membrane-spanning segment; the sequence is MMIVVVCTFAICWLPFHIFFLL. The Extracellular portion of the chain corresponds to 271–283; it reads PYINPDLYLKKFI. The chain crosses the membrane as a helical span at residues 284 to 308; the sequence is QQVYLAIMWLAMSSTMYNPIIYCCL. Over 309–407 the chain is Cytoplasmic; the sequence is NDRFRLGFKH…SFSFSSNVLS (99 aa). C322 is lipidated: S-palmitoyl cysteine. The segment at 364-407 is disordered; sequence AHEEEPEDGPKATPSSLDLTSNCSSRSDSKTMTESFSFSSNVLS. Over residues 376-407 the composition is skewed to polar residues; that stretch reads TPSSLDLTSNCSSRSDSKTMTESFSFSSNVLS.

The protein belongs to the G-protein coupled receptor 1 family. Interacts with ARRB1.

The protein localises to the cell membrane. Functionally, this is a receptor for the tachykinin neuropeptide substance P. It is probably associated with G proteins that activate a phosphatidylinositol-calcium second messenger system. The rank order of affinity of this receptor to tachykinins is: substance P &gt; substance K &gt; neuromedin-K. The protein is Substance-P receptor (TACR1) of Homo sapiens (Human).